We begin with the raw amino-acid sequence, 173 residues long: Adenine phosphoribosyltransferase (173 aa).

The protein belongs to the purine/pyrimidine phosphoribosyltransferase family. As to quaternary structure, homodimer.

The protein resides in the cytoplasm. It catalyses the reaction AMP + diphosphate = 5-phospho-alpha-D-ribose 1-diphosphate + adenine. It functions in the pathway purine metabolism; AMP biosynthesis via salvage pathway; AMP from adenine: step 1/1. Its function is as follows. Catalyzes a salvage reaction resulting in the formation of AMP, that is energically less costly than de novo synthesis. This chain is Adenine phosphoribosyltransferase, found in Methanococcus vannielii (strain ATCC 35089 / DSM 1224 / JCM 13029 / OCM 148 / SB).